The sequence spans 341 residues: Anthranilate phosphoribosyltransferase (341 aa).

5-phospho-alpha-D-ribose 1-diphosphate is bound by residues G81, 84–85 (GD), T89, 91–94 (NIST), 109–117 (KHGSRSVSG), and S121. G81 contacts anthranilate. Position 93 (S93) interacts with Mg(2+). An anthranilate-binding site is contributed by R167. The Mg(2+) site is built by D226 and E227.

It belongs to the anthranilate phosphoribosyltransferase family. In terms of assembly, homodimer. Requires Mg(2+) as cofactor.

The enzyme catalyses N-(5-phospho-beta-D-ribosyl)anthranilate + diphosphate = 5-phospho-alpha-D-ribose 1-diphosphate + anthranilate. Its pathway is amino-acid biosynthesis; L-tryptophan biosynthesis; L-tryptophan from chorismate: step 2/5. Functionally, catalyzes the transfer of the phosphoribosyl group of 5-phosphorylribose-1-pyrophosphate (PRPP) to anthranilate to yield N-(5'-phosphoribosyl)-anthranilate (PRA). In Methylococcus capsulatus (strain ATCC 33009 / NCIMB 11132 / Bath), this protein is Anthranilate phosphoribosyltransferase.